A 30-amino-acid chain; its full sequence is Bowman-Birk type proteinase inhibitor 3 (30 aa).

2 disulfides stabilise this stretch: cysteine 9–cysteine 24 and cysteine 14–cysteine 22.

In terms of biological role, inhibits trypsin (IC(50)=4.90 nM) and, to a lesser extent, alpha-chymotrypsin (IC(50)=1.87 uM). This chain is Bowman-Birk type proteinase inhibitor 3, found in Lathyrus sativus (White vetchling).